A 64-amino-acid chain; its full sequence is Conotoxin Cal6.24 (64 aa).

Residues 1–22 (MKLTCVMIVAVLVLTVCKVVTS) form the signal peptide. 3 cysteine pairs are disulfide-bonded: Cys-32–Cys-50, Cys-40–Cys-54, and Cys-49–Cys-60.

Expressed by the venom duct.

The protein resides in the secreted. Its function is as follows. Probable neurotoxin. This chain is Conotoxin Cal6.24, found in Californiconus californicus (California cone).